A 1647-amino-acid chain; its full sequence is Putative RNA exonuclease pqe-1 (1647 aa).

Disordered regions lie at residues 1 to 199, 274 to 393, 515 to 619, and 641 to 665; these read MFNG…QVQN, QTPA…TSLP, MMQQ…KPVI, and QVKQ…PTAR. 2 stretches are compositionally biased toward low complexity: residues 30–64 and 99–131; these read GPSQ…SGAS and TQPQ…AAAA. Residues 143–170 are compositionally biased toward polar residues; sequence SREQGNAHQPTAGQIPQSSNQPAQQTHN. Low complexity-rich tracts occupy residues 274 to 297 and 515 to 526; these read QTPA…NPQQ and MMQQQAMQMQMQ. Positions 527-540 are enriched in pro residues; that stretch reads NPPPVHQQPPPQQP. Positions 541 to 555 are enriched in low complexity; that stretch reads PQQQRQKQQRSQPAP. Residues 592–601 show a composition bias toward basic and acidic residues; that stretch reads SKIEPVDVKP. Residues 650-664 are compositionally biased toward low complexity; it reads SSTSDATKSDAAPTA. A coiled-coil region spans residues 686–726; that stretch reads SAKKFERMKAEAEDKEDMKKKIAALQEALFNIQEERRVEKE. Residues 736 to 756 are compositionally biased toward polar residues; it reads AVPQNQPASSVQIAQVSTSES. The interval 736-1174 is disordered; sequence AVPQNQPASS…LRNKKHTTEE (439 aa). The span at 761 to 772 shows a compositional bias: low complexity; sequence TSEAAATETMTS. Residues 783–793 are compositionally biased toward acidic residues; that stretch reads TEGEQEEDEDE. Positions 822–833 are enriched in basic and acidic residues; it reads RSDEKREKRHVS. The span at 878-905 shows a compositional bias: acidic residues; the sequence is DNEDDDADSFVVGDDEPIEYEEEDEDDM. Residues 977–992 are compositionally biased toward low complexity; sequence TPTASSSMSSSTLSYC. The span at 1018–1031 shows a compositional bias: basic and acidic residues; that stretch reads KTREENRERKRLAQ. Polar residues predominate over residues 1038–1054; that stretch reads SETTGVRRTLRSTQDNS. Composition is skewed to basic and acidic residues over residues 1076–1088 and 1139–1174; these read AKSS…EKQK and NHTE…TTEE. Positions 1142–1187 form a coiled coil; sequence EMLDKRNKESEEKRRKDRDELERLRNKKHTTEEEKIKMARLQNALK. An Exonuclease domain is found at 1477–1637; it reads RVYALDCEMV…IFYGLRNPES (161 aa).

Belongs to the REXO1/REXO3 family. Expressed in the excretory canal, vulval cells, the intestine and in head and tail neurons including ASH, RIC and AIZ neurons.

It is found in the nucleus. Functionally, putative RNA exonuclease which protects neurons from the toxic effects of expanded poly-Q disease proteins. It is unknown whether this is via participation in the pathogenic mechanism underlying poly-Q-induced neurodegeneration or if it is by acting as a genetic modifier of the age of onset or progression of neurodegeneration. Regulates gene expression in neurons. This Caenorhabditis elegans protein is Putative RNA exonuclease pqe-1.